The primary structure comprises 582 residues: Choline kinase (582 aa).

The interval 1-36 (MVQESRPGSVRSYSVGYQARSRSSSQRRHSLTRQRS) is disordered. The residue at position 30 (serine 30) is a Phosphoserine; by PKA. Serine 48 and serine 51 each carry phosphoserine. The residue at position 54 (threonine 54) is a Phosphothreonine. Serine 85 bears the Phosphoserine; by PKA mark.

The protein belongs to the choline/ethanolamine kinase family. Monomer. Interacts with NAP1. Requires Mg(2+) as cofactor.

Its subcellular location is the cytoplasm. The enzyme catalyses choline + ATP = phosphocholine + ADP + H(+). It catalyses the reaction ethanolamine + ATP = phosphoethanolamine + ADP + H(+). It participates in phospholipid metabolism; phosphatidylcholine biosynthesis; phosphocholine from choline: step 1/1. Catalyzes the committed step in the synthesis of phosphatidylcholine by the CDP-choline pathway. Also exhibits ethanolamine kinase activity but it is a poor substrate at 14% efficiency compared with choline. The polypeptide is Choline kinase (Saccharomyces cerevisiae (strain ATCC 204508 / S288c) (Baker's yeast)).